Consider the following 131-residue polypeptide: Plastocyanin (131 aa).

Positions 1–34 (MKFFASLSKRFAPVLSLVVLVAGTLLLSAAPASA) are cleaved as a signal peptide. The Plastocyanin-like domain maps to 35–131 (ATVQIKMGTD…AGMVGTITVE (97 aa)). Cu cation-binding residues include histidine 73, cysteine 116, histidine 119, and methionine 124.

The protein belongs to the plastocyanin family. Requires Cu(2+) as cofactor.

The protein resides in the cellular thylakoid membrane. Functionally, participates in electron transfer between P700 and the cytochrome b6-f complex in photosystem I. The chain is Plastocyanin (petE) from Prochlorothrix hollandica.